Here is a 520-residue protein sequence, read N- to C-terminus: Membrane-bound glycerophospholipid O-acyltransferase 2 (520 aa).

6 consecutive transmembrane segments (helical) span residues 22-42 (PIDQ…AIWF), 61-81 (TLLG…HFLV), 88-108 (CIMI…FALG), 184-204 (FMGI…FIEG), 237-257 (LLVC…LPVE), and 264-284 (FQAT…LLAA). Active-site residues include Asn-342 and His-373. 3 helical membrane-spanning segments follow: residues 366–386 (FILS…FLTG), 416–436 (VITW…FVLL), and 444–464 (FYSS…LLLP).

This sequence belongs to the membrane-bound acyltransferase family. As to expression, expressed in neutrophils.

It localises to the endoplasmic reticulum membrane. It catalyses the reaction a 1-acyl-sn-glycero-3-phosphocholine + an acyl-CoA = a 1,2-diacyl-sn-glycero-3-phosphocholine + CoA. The catalysed reaction is a 1-acyl-sn-glycero-3-phosphoethanolamine + an acyl-CoA = a 1,2-diacyl-sn-glycero-3-phosphoethanolamine + CoA. The enzyme catalyses a 1-acyl-sn-glycero-3-phosphate + an acyl-CoA = a 1,2-diacyl-sn-glycero-3-phosphate + CoA. It carries out the reaction (9Z)-hexadecenoyl-CoA + 1-hexadecanoyl-sn-glycero-3-phosphocholine = 1-hexadecanoyl-2-(9Z-hexadecenoyl)-sn-glycero-3-phosphocholine + CoA. It catalyses the reaction 1-hexadecanoyl-sn-glycero-3-phosphoethanolamine + (9Z)-octadecenoyl-CoA = 1-hexadecanoyl-2-(9Z-octadecenoyl)-sn-glycero-3-phosphoethanolamine + CoA. The catalysed reaction is 1-hexadecanoyl-sn-glycero-3-phosphoethanolamine + (9Z)-hexadecenoyl-CoA = 1-hexadecanoyl-2-(9Z)-hexadecenoyl-sn-glycero-3-phosphoethanolamine + CoA. The enzyme catalyses 1-(9Z-octadecenoyl)-sn-glycero-3-phospho-L-serine + hexadecanoyl-CoA = 1-(9Z)-octadecenoyl-2-hexadecanoyl-sn-glycero-3-phosphoserine + CoA. It carries out the reaction (9Z,12Z)-octadecadienoyl-CoA + 1-hexadecanoyl-sn-glycero-3-phosphocholine = 1-hexadecanoyl-2-(9Z,12Z-octadecadienoyl)-sn-glycero-3-phosphocholine + CoA. It catalyses the reaction 1-hexadecanoyl-sn-glycero-3-phosphocholine + (9Z)-octadecenoyl-CoA = 1-hexadecanoyl-2-(9Z-octadecenoyl)-sn-glycero-3-phosphocholine + CoA. The catalysed reaction is 1-hexadecanoyl-sn-glycero-3-phosphate + (9Z)-hexadecenoyl-CoA = 1-hexadecanoyl-2-[(9Z)-hexadec-9-enoyl]-sn-glycero-3-phosphate + CoA. The enzyme catalyses 1-hexadecanoyl-sn-glycero-3-phosphate + (9Z)-octadecenoyl-CoA = 1-hexadecanoyl-2-(9Z-octadecenoyl)-sn-glycero-3-phosphate + CoA. It carries out the reaction a 1-O-(1Z-alkenyl)-sn-glycero-3-phosphocholine + (9Z)-octadecenoyl-CoA = 1-O-(1Z)-alkenyl-2-(9Z)-octadecenoyl-sn-glycero-3-phosphocholine + CoA. It catalyses the reaction a 1-O-(1Z-alkenyl)-sn-glycero-3-phosphoethanolamine + (9Z)-octadecenoyl-CoA = 1-O-(1Z)-alkenyl-2-(9Z)-octadecenoyl-sn-glycero-3-phosphoethanolamine + CoA. The catalysed reaction is 1-octadecanoyl-sn-glycero-3-phosphoethanolamine + (9Z)-octadecenoyl-CoA = 1-octadecanoyl-2-(9Z-octadecenoyl)-sn-glycero-3-phosphoethanolamine + CoA. The enzyme catalyses 1-octadecanoyl-sn-glycero-3-phosphocholine + (9Z)-octadecenoyl-CoA = 1-octadecanoyl-2-(9Z-octadecenoyl)-sn-glycero-3-phosphocholine + CoA. It carries out the reaction 1-(9Z-octadecenoyl)-sn-glycero-3-phosphoethanolamine + (9Z)-octadecenoyl-CoA = 1,2-di-(9Z-octadecenoyl)-sn-glycero-3-phosphoethanolamine + CoA. The protein operates within lipid metabolism; phospholipid metabolism. Partially inhibited by thimerosal. Functionally, acyltransferase which catalyzes the transfer of an acyl group from an acyl-CoA to a lysophospholipid leading to the production of a phospholipid and participates in the reacylation step of the phospholipid remodeling pathway also known as the Lands cycle. Catalyzes preferentially the acylation of lysophosphatidylethanolamine (1-acyl-sn-glycero-3-phosphoethanolamine or LPE) and lysophosphatidic acid (LPA) and to a lesser extend lysophosphatidylcholine (LPC) and lysophosphatidylserine (LPS). Prefers oleoyl-CoA as the acyl donor. May be involved in chondrocyte differentiation. The polypeptide is Membrane-bound glycerophospholipid O-acyltransferase 2 (Homo sapiens (Human)).